The sequence spans 355 residues: Sesquiterpene synthase-like protein Agr11 (355 aa).

The protein belongs to the terpene synthase family.

The chain is Sesquiterpene synthase-like protein Agr11 from Cyclocybe aegerita (Black poplar mushroom).